Consider the following 532-residue polypeptide: 4-amino-L-phenylalanyl-[CmlP-peptidyl-carrier-protein] 3-hydroxylase (532 aa).

Fe cation contacts are provided by H305, H307, D309, H310, E377, and D403.

Belongs to the metallo-beta-lactamase superfamily. As to quaternary structure, homodimer. Fe(2+) serves as cofactor.

The enzyme catalyses 4-amino-L-phenylalanyl-[peptidyl-carrier protein] + AH2 + O2 = (2R)-2-(4-aminophenyl)-L-seryl-[peptidyl-carrier protein] + A + H2O. The protein operates within antibiotic biosynthesis. In terms of biological role, involved in chloramphenicol biosynthesis. Catalyzes the beta-hydroxylation of 4-amino-L-phenylalanine (L-PAPA) covalently bound to CmlP to form L-p-aminophenylserine. The protein is 4-amino-L-phenylalanyl-[CmlP-peptidyl-carrier-protein] 3-hydroxylase of Streptomyces venezuelae (strain ATCC 10712 / CBS 650.69 / DSM 40230 / JCM 4526 / NBRC 13096 / PD 04745).